Consider the following 499-residue polypeptide: Lysine--tRNA ligase (499 aa).

The Mg(2+) site is built by Glu-403 and Glu-410.

This sequence belongs to the class-II aminoacyl-tRNA synthetase family. Homodimer. Mg(2+) is required as a cofactor.

Its subcellular location is the cytoplasm. It catalyses the reaction tRNA(Lys) + L-lysine + ATP = L-lysyl-tRNA(Lys) + AMP + diphosphate. The polypeptide is Lysine--tRNA ligase (Campylobacter hominis (strain ATCC BAA-381 / DSM 21671 / CCUG 45161 / LMG 19568 / NCTC 13146 / CH001A)).